Here is a 128-residue protein sequence, read N- to C-terminus: uncharacterized protein (128 aa).

4 helical membrane-spanning segments follow: residues 2–22, 34–54, 64–84, and 108–128; these read LPFYFLSVATNAAIGFILTVL, FLYDATFSLVLALLSGIAAVC, LPVLGDLIPTLAGGTGCALFL, and LGLFSLAASILHLLFAPTLFL.

The protein resides in the cell membrane. This is an uncharacterized protein from Treponema pallidum (strain Nichols).